Consider the following 138-residue polypeptide: Large ribosomal subunit protein uL16 (138 aa).

The span at Met-1–Gln-17 shows a compositional bias: basic residues. A disordered region spans residues Met-1 to Ser-22.

It belongs to the universal ribosomal protein uL16 family. Part of the 50S ribosomal subunit.

Functionally, binds 23S rRNA and is also seen to make contacts with the A and possibly P site tRNAs. In Mycobacterium tuberculosis (strain ATCC 25177 / H37Ra), this protein is Large ribosomal subunit protein uL16.